The primary structure comprises 104 residues: uncharacterized protein (104 aa).

Residues 77 to 98 traverse the membrane as a helical segment; sequence IAAVRANIIICACFFYLFCYCS.

Its subcellular location is the membrane. This is an uncharacterized protein from Saccharomyces cerevisiae (strain ATCC 204508 / S288c) (Baker's yeast).